The following is a 77-amino-acid chain: Defensin-like protein 159 (77 aa).

The first 27 residues, 1-27 (MAKLSCSYFLVLILVFSAFLMVERAEG), serve as a signal peptide directing secretion. Cystine bridges form between cysteine 30/cysteine 77, cysteine 40/cysteine 59, cysteine 45/cysteine 71, and cysteine 49/cysteine 73.

It belongs to the DEFL family.

It is found in the secreted. The sequence is that of Defensin-like protein 159 (LCR25) from Arabidopsis thaliana (Mouse-ear cress).